The primary structure comprises 134 residues: Large ribosomal subunit protein eL28 (134 aa).

Serine 60 is modified (phosphoserine).

Belongs to the eukaryotic ribosomal protein eL28 family. In terms of assembly, component of the large ribosomal subunit (LSU). Mature yeast ribosomes consist of a small (40S) and a large (60S) subunit. The 40S small subunit contains 1 molecule of ribosomal RNA (18S rRNA) and at least 33 different proteins. The large 60S subunit contains 3 rRNA molecules (25S, 5.8S and 5S rRNA) and at least 46 different proteins.

The protein resides in the cytoplasm. In terms of biological role, component of the ribosome, a large ribonucleoprotein complex responsible for the synthesis of proteins in the cell. The small ribosomal subunit (SSU) binds messenger RNAs (mRNAs) and translates the encoded message by selecting cognate aminoacyl-transfer RNA (tRNA) molecules. The large subunit (LSU) contains the ribosomal catalytic site termed the peptidyl transferase center (PTC), which catalyzes the formation of peptide bonds, thereby polymerizing the amino acids delivered by tRNAs into a polypeptide chain. The nascent polypeptides leave the ribosome through a tunnel in the LSU and interact with protein factors that function in enzymatic processing, targeting, and the membrane insertion of nascent chains at the exit of the ribosomal tunnel. In Schizosaccharomyces pombe (strain 972 / ATCC 24843) (Fission yeast), this protein is Large ribosomal subunit protein eL28 (rpl44).